Consider the following 186-residue polypeptide: Elongation factor P (186 aa).

This sequence belongs to the elongation factor P family.

It is found in the cytoplasm. It participates in protein biosynthesis; polypeptide chain elongation. Functionally, involved in peptide bond synthesis. Stimulates efficient translation and peptide-bond synthesis on native or reconstituted 70S ribosomes in vitro. Probably functions indirectly by altering the affinity of the ribosome for aminoacyl-tRNA, thus increasing their reactivity as acceptors for peptidyl transferase. This Streptococcus sanguinis (strain SK36) protein is Elongation factor P.